Here is a 109-residue protein sequence, read N- to C-terminus: uncharacterized protein (109 aa).

This is an uncharacterized protein from Mycoplasma genitalium (strain ATCC 33530 / DSM 19775 / NCTC 10195 / G37) (Mycoplasmoides genitalium).